The primary structure comprises 671 residues: DNA ligase (671 aa).

Residues 32–36 (DAEYD), 81–82 (SL), and Glu-113 each bind NAD(+). Lys-115 acts as the N6-AMP-lysine intermediate in catalysis. 4 residues coordinate NAD(+): Arg-136, Glu-173, Lys-290, and Lys-314. Residues Cys-408, Cys-411, Cys-426, and Cys-432 each contribute to the Zn(2+) site. The 79-residue stretch at 593–671 (EIDSPFAGKT…ETEMLRLLGS (79 aa)) folds into the BRCT domain.

Belongs to the NAD-dependent DNA ligase family. LigA subfamily. Mg(2+) serves as cofactor. The cofactor is Mn(2+).

The catalysed reaction is NAD(+) + (deoxyribonucleotide)n-3'-hydroxyl + 5'-phospho-(deoxyribonucleotide)m = (deoxyribonucleotide)n+m + AMP + beta-nicotinamide D-nucleotide.. In terms of biological role, DNA ligase that catalyzes the formation of phosphodiester linkages between 5'-phosphoryl and 3'-hydroxyl groups in double-stranded DNA using NAD as a coenzyme and as the energy source for the reaction. It is essential for DNA replication and repair of damaged DNA. This is DNA ligase from Escherichia coli O127:H6 (strain E2348/69 / EPEC).